A 368-amino-acid polypeptide reads, in one-letter code: Protein trichome birefringence-like 43 (368 aa).

Residues 9–25 (GVVSVMVLMILVLLKQI) traverse the membrane as a helical; Signal-anchor for type II membrane protein segment. Residues 117 to 119 (GDS) carry the GDS motif motif. Positions 344–358 (DCSHWCLSGVPDSWN) match the DCXHWCLPGXXDXWN motif motif.

It belongs to the PC-esterase family. TBL subfamily.

It localises to the membrane. Its function is as follows. May act as a bridging protein that binds pectin and other cell wall polysaccharides. Probably involved in maintaining esterification of pectins. May be involved in the specific O-acetylation of cell wall polymers. This is Protein trichome birefringence-like 43 (TBL43) from Arabidopsis thaliana (Mouse-ear cress).